A 3890-amino-acid polypeptide reads, in one-letter code: Extracellular matrix-binding protein EbhB (3890 aa).

The N-terminal stretch at 1 to 39 is a signal peptide; it reads MNYRDKIQKFSIRKYTVGTFSTVIATLVFLGFNTSQAHA. Residues 41–59 show a composition bias toward polar residues; that stretch reads ETNQPASVVKQKQQSNNEQ. 4 disordered regions span residues 41–152, 249–277, 1347–1372, and 2418–2438; these read ETNQ…GNDN, MPQR…PRSV, NEKA…NATT, and TITP…TLTA. Positions 65–78 are enriched in low complexity; the sequence is SQVQNSQNSQNSQS. A compositionally biased stretch (polar residues) spans 79 to 117; sequence LSATHENEQPNNSQANLVNQKVAQSSTTNDEQPASQNVN. The segment covering 130-140 has biased composition (basic and acidic residues); sequence PDKEESKHKQN. Composition is skewed to polar residues over residues 141 to 151, 250 to 266, 1360 to 1372, and 2427 to 2438; these read ESQSANKNGND, PQRQ…QTRS, YRTT…NATT, and HSVSSNPSTLTA. 13 consecutive FIVAR domains span residues 2524–2580, 2610–2666, 2687–2750, 2780–2836, 2864–2919, 2947–3002, 3030–3085, 3154–3212, 3280–3339, 3407–3465, 3533–3591, 3659–3717, and 3785–3843; these read AKNH…VSDA, SKNN…ISDE, DTHA…VQSA, AKTK…IAAE, AKTQ…IRQN, AKNQ…INTN, AKTQ…INDK, AMTK…VNQK, AMTG…VNNA, AMGN…VNRA, AMGN…VTEA, AMNT…ITQK, and AMAN…VEAA.

This Staphylococcus aureus (strain N315) protein is Extracellular matrix-binding protein EbhB (ebhB).